Consider the following 165-residue polypeptide: Nucleotide-binding protein Ctha_0558 (165 aa).

Belongs to the YajQ family.

Its function is as follows. Nucleotide-binding protein. The chain is Nucleotide-binding protein Ctha_0558 from Chloroherpeton thalassium (strain ATCC 35110 / GB-78).